A 296-amino-acid polypeptide reads, in one-letter code: tRNA dimethylallyltransferase (296 aa).

2-9 contacts ATP; that stretch reads GPTASGKT. 4–9 serves as a coordination point for substrate; it reads TASGKT. 3 interaction with substrate tRNA regions span residues 27-30, 151-155, and 232-237; these read DSAL, QRLSR, and RCVGYR.

This sequence belongs to the IPP transferase family. As to quaternary structure, monomer. Requires Mg(2+) as cofactor.

It carries out the reaction adenosine(37) in tRNA + dimethylallyl diphosphate = N(6)-dimethylallyladenosine(37) in tRNA + diphosphate. Catalyzes the transfer of a dimethylallyl group onto the adenine at position 37 in tRNAs that read codons beginning with uridine, leading to the formation of N6-(dimethylallyl)adenosine (i(6)A). In Shewanella woodyi (strain ATCC 51908 / MS32), this protein is tRNA dimethylallyltransferase.